The sequence spans 316 residues: Tyrosine--tRNA ligase 2 (316 aa).

Tyr26, Tyr146, Gln150, Asp153, and Gln168 together coordinate L-tyrosine. Positions 219–223 (KMSKS) match the 'KMSKS' region motif. Lys222 contacts ATP.

It belongs to the class-I aminoacyl-tRNA synthetase family. TyrS type 4 subfamily. As to quaternary structure, homodimer.

It localises to the cytoplasm. The catalysed reaction is tRNA(Tyr) + L-tyrosine + ATP = L-tyrosyl-tRNA(Tyr) + AMP + diphosphate + H(+). Functionally, catalyzes the attachment of tyrosine to tRNA(Tyr) in a two-step reaction: tyrosine is first activated by ATP to form Tyr-AMP and then transferred to the acceptor end of tRNA(Tyr). The chain is Tyrosine--tRNA ligase 2 from Pyrobaculum aerophilum (strain ATCC 51768 / DSM 7523 / JCM 9630 / CIP 104966 / NBRC 100827 / IM2).